Here is a 38-residue protein sequence, read N- to C-terminus: Alpha-conotoxin LvIC (38 aa).

The propeptide occupies 1–21 (SNGRNAAAGDKPSYWITLAIT). Disulfide bonds link cysteine 23–cysteine 29 and cysteine 24–cysteine 34. Glutamine 35 is modified (glutamine amide).

The protein belongs to the conotoxin A superfamily. The two analogs ([DelQ14]LvIC and [D1G,DelQ14]LvIC) are amidated at their N-terminal Cys. As to expression, expressed by the venom gland.

It is found in the secreted. Functionally, alpha-conotoxins bind to the nicotinic acetylcholine receptors (nAChR) and inhibit them. This synthetic peptide inhibits rat alpha-6/alpha-3-beta-4 nAChR (IC(50)=3.3 uM). This chain is Alpha-conotoxin LvIC, found in Conus lividus (Livid cone).